The following is a 552-amino-acid chain: Non-structural protein NS1 (552 aa).

The protein belongs to the orbivirus non-structural protein NS1 family.

The protein is Non-structural protein NS1 (Segment-5) of Antilocapra americana (Pronghorn).